Here is an 821-residue protein sequence, read N- to C-terminus: Condensin-2 complex subunit kle-2 (821 aa).

Residues 389–426 are disordered; sequence VMQNDEPNTSRRPDENYAPMDFDDDFGGGGDDDDDDYI. Residues 409–424 are compositionally biased toward acidic residues; the sequence is DFDDDFGGGGDDDDDD. Positions 529-561 form a coiled coil; sequence TAILAEKKRRIKEKTAKIREARIQNMQRKRTAR.

Belongs to the CND2 H2 (condensin-2 subunit 2) family. As to quaternary structure, component of the condensin II complex, which contains the mix-1/SMC2 and smc-4/SMC4 heterodimer, and three non SMC subunits, capg-2, kle-2 and hcp-6 that probably regulate the complex. Within the complex, interacts with mix-1, smc-4, capg-2 and hcp-6.

The protein localises to the nucleus. The protein resides in the chromosome. It localises to the centromere. In terms of biological role, regulatory subunit of the condensin II complex, a complex that seems to play a role in prophase chromosome condensation and in chromosome segregation in mitosis and in meiosis. This chain is Condensin-2 complex subunit kle-2 (kle-2), found in Caenorhabditis elegans.